The sequence spans 363 residues: Type 3 secretion system translocon protein SctB (363 aa).

Positions 1-16 are enriched in polar residues; sequence MEIQNTKPTQTLYTDI. Positions 1–30 are disordered; sequence MEIQNTKPTQTLYTDISTKQTQSSSETQKS. Residues 17–30 are compositionally biased toward low complexity; sequence STKQTQSSSETQKS. The ipgC chaperone binding domain stretch occupies residues 33-73; it reads YQQIAAHIPLNVGKNPVLTTTLNDDQLLKLSEQVQHDSEII. The chain crosses the membrane as a helical span at residues 99–120; that stretch reads ISSLSSNAVSLIISVAVLLSAL.

Belongs to the SctB/SipC family. As to quaternary structure, the core secretion machinery of the T3SS is composed of approximately 20 different proteins, including cytoplasmic components, a base, an export apparatus and a needle. This subunit is involved in the formation of a pore, called the translocon, in host membrane. Interacts with IpaB/SctE. Interacts with the molecular chaperone IpgC, which prevents premature association with IpaB/SctE within the cytoplasm of Shigella cells. Does not interact with CDC42 or RAC1 GTPases in vitro.

It localises to the secreted. Its subcellular location is the host membrane. Interaction with the membrane is affected by the pH. Functionally, component of the type III secretion system (T3SS), also called injectisome, which is used to inject bacterial effector proteins into eukaryotic host cells. IpaB/SctE and IpaC/SctB are inserted into the host membrane where they form a pore and allow the translocation of effector proteins into the cytosol of target cells. Induction and secretion of IpaC/SctB comprise the final step in triggering the induction of full type III secretion. Required for efficient dissemination. Necessary for lysis of the two cellular membranes that surround bacteria in protrusions during cell-to-cell spread. Contribute to actin nucleation in vitro, which may be a necessary step in Shigella invasion. The sequence is that of Type 3 secretion system translocon protein SctB from Shigella flexneri.